The following is a 217-amino-acid chain: Large ribosomal subunit protein uL3 (217 aa).

Residues 134–154 (DATHGNSLSHRAPGSIGQCQT) are disordered. N5-methylglutamine is present on Q153.

Belongs to the universal ribosomal protein uL3 family. In terms of assembly, part of the 50S ribosomal subunit. Forms a cluster with proteins L14 and L19. In terms of processing, methylated by PrmB.

Functionally, one of the primary rRNA binding proteins, it binds directly near the 3'-end of the 23S rRNA, where it nucleates assembly of the 50S subunit. The sequence is that of Large ribosomal subunit protein uL3 from Coxiella burnetii (strain Dugway 5J108-111).